A 196-amino-acid chain; its full sequence is Proteasome subunit beta 1 (196 aa).

Positions 1-6 (MEELPA) are cleaved as a propeptide — removed in mature form; by autocatalysis. The Nucleophile role is filled by Thr-7.

Belongs to the peptidase T1B family. As to quaternary structure, the 20S proteasome core is composed of 14 alpha and 14 beta subunits that assemble into four stacked heptameric rings, resulting in a barrel-shaped structure. The two inner rings, each composed of seven catalytic beta subunits, are sandwiched by two outer rings, each composed of seven alpha subunits. The catalytic chamber with the active sites is on the inside of the barrel. Has a gated structure, the ends of the cylinder being occluded by the N-termini of the alpha-subunits. Is capped at one or both ends by the proteasome regulatory ATPase, PAN.

It localises to the cytoplasm. It catalyses the reaction Cleavage of peptide bonds with very broad specificity.. The formation of the proteasomal ATPase PAN-20S proteasome complex, via the docking of the C-termini of PAN into the intersubunit pockets in the alpha-rings, triggers opening of the gate for substrate entry. Interconversion between the open-gate and close-gate conformations leads to a dynamic regulation of the 20S proteasome proteolysis activity. In terms of biological role, component of the proteasome core, a large protease complex with broad specificity involved in protein degradation. The sequence is that of Proteasome subunit beta 1 from Saccharolobus islandicus (strain Y.N.15.51 / Yellowstone #2) (Sulfolobus islandicus).